Reading from the N-terminus, the 36-residue chain is Hemoglobin subunit beta (36 aa).

The Globin domain maps to 1–36 (VCVLAHHFGKEFTPQVQAAYQKVVAGVANALAHKYH). Residue Lys34 is modified to N6-acetyllysine.

This sequence belongs to the globin family. In terms of assembly, heterotetramer of two alpha chains and two beta chains. Red blood cells.

Involved in oxygen transport from the lung to the various peripheral tissues. In Pongo pygmaeus (Bornean orangutan), this protein is Hemoglobin subunit beta (HBB).